Consider the following 148-residue polypeptide: Ribonuclease H (148 aa).

The region spanning 1 to 143 (MNQVVIYTDG…ADMLANKGVE (143 aa)) is the RNase H type-1 domain. The Mg(2+) site is built by Asp9, Glu47, Asp69, and Asp135.

The protein belongs to the RNase H family. As to quaternary structure, monomer. Mg(2+) serves as cofactor.

The protein resides in the cytoplasm. It catalyses the reaction Endonucleolytic cleavage to 5'-phosphomonoester.. Its function is as follows. Endonuclease that specifically degrades the RNA of RNA-DNA hybrids. The polypeptide is Ribonuclease H (Acidovorax sp. (strain JS42)).